Consider the following 235-residue polypeptide: Homeobox protein Nkx-2.8 (235 aa).

The span at 51–67 (SDESGLETSPADSSQLA) shows a compositional bias: polar residues. The segment at 51–86 (SDESGLETSPADSSQLASLRRESPGSDPEKRRKRRV) is disordered. Residues 69 to 80 (LRRESPGSDPEK) are compositionally biased toward basic and acidic residues. The segment at residues 81-140 (RRKRRVLFSKAQTLELERRFRQQRYLSAPEREQLARLLRLTPTQVKIWFQNHRYKLKRGR) is a DNA-binding region (homeobox).

It belongs to the NK-2 homeobox family. In terms of tissue distribution, prominent expression in ventral brain and neural tube structures.

The protein resides in the nucleus. Functionally, possible role in the specification of a distinct subset of neurons. The protein is Homeobox protein Nkx-2.8 (Nkx2-8) of Mus musculus (Mouse).